A 286-amino-acid polypeptide reads, in one-letter code: MTQHDPVARQASISEEMHISAEFDAEYEIERRVAFLANYLRSSGLKTYVLGISGGVDSTTAGRLAQLAVERLRAEHYDAHFVAIRLPYGEQKDEADAQQALRFIRADENLTIDIKPAADAMLAALDQSGLLYKDESQQDFVHGNIKARQRMIAQYAVASARAGVVIGTDHAAESVMGFFTKFGDGGADVLPLTGLNKRRVRAVSKALGAPEALAHKVPTADLEMLRPQRPDEDAYGIPYDAIDDFLERKPVSDAARETILRFHEVTRHKRALPYTPFDWPVQTSGD.

G51–S58 serves as a coordination point for ATP. Position 57 (D57) interacts with Mg(2+). R148 is a deamido-NAD(+) binding site. T168 contacts ATP. Position 173 (E173) interacts with Mg(2+). K181 and D188 together coordinate deamido-NAD(+). ATP contacts are provided by K197 and T219. A deamido-NAD(+)-binding site is contributed by H268–K269.

It belongs to the NAD synthetase family. As to quaternary structure, homodimer.

It carries out the reaction deamido-NAD(+) + NH4(+) + ATP = AMP + diphosphate + NAD(+) + H(+). It functions in the pathway cofactor biosynthesis; NAD(+) biosynthesis; NAD(+) from deamido-NAD(+) (ammonia route): step 1/1. Its function is as follows. Catalyzes the ATP-dependent amidation of deamido-NAD to form NAD. Uses ammonia as a nitrogen source. The polypeptide is NH(3)-dependent NAD(+) synthetase (Paraburkholderia phytofirmans (strain DSM 17436 / LMG 22146 / PsJN) (Burkholderia phytofirmans)).